The following is a 681-amino-acid chain: MAPLHFTILILFSFVIVVSSSSFTPPRHPFDPLTETELKLVRTIINKSYPVGPNHKFTFQYVGLNEPNKSLVLSWYSSPNHTIKPPPRQAFVIARDNGKTREIVLDFSSRAIVSDKIHVGNGYPMLSNDEQEASTELVVKFKPFIDSVAKRGLNVSEIVFTTSTIGWYGETKAEAERVIRLMPFYLDGTVNMYLRPIEGMTIIVNLDEMKVSEFKDRSVVTMPIANGTEYRISKLNPPFGPTLHNAVLLQPDGPGFKVDGHIVRWANWEFHISFDVRAGIVISLASLFDTDVNKYRQVLYKGHLSEMFIPYMDPSDDWYFITYLDCGDFGCGQCAVSLQPYTDCPAGAVFMDGIFAGQDGTPAKIPKVMCIFEKYAGDIMWRHTEAEIPNLEITEVRPDVSLVARIVTTVGNYDYIVDYEFKPSGSIKMGVGLTGVLEVKPVEYIHTSEIKLGEDIHGTIVADNTVGVNHDHFVTFRLHLDIDGTENSFVRNELVTTRSPKSVNTPRKTYWTTKPKTAKTEAEARVKLGLKAEELVVVNPNRKTKHGNEVGYRLLHGSAAGPLLAQDDFPQIRAAFTNYNVWITPYNRSEVWAGGLYADRSQGDDTLAVWSQRNRKIEKEDIVMWYTVGFHHVPSQEDYPTMPTLSGGFELRPTNFFERNPVLKTKPVKVTTARKCTPKND.

323–334 (YLDCGDFGCGQC) provides a ligand contact to substrate. Catalysis depends on Asp325, which acts as the Proton acceptor. Cys344 and Cys370 are disulfide-bonded. 410-415 (VGNYDY) serves as a coordination point for substrate. The Schiff-base intermediate with substrate; via topaquinone role is filled by Tyr413. Tyr413 is subject to 2',4',5'-topaquinone. The Cu cation site is built by His470 and His472. 3 residues coordinate Mn(2+): Asp481, Asp621, and Ile622. Residue His632 coordinates Cu cation.

Belongs to the copper/topaquinone oxidase family. Post-translationally, topaquinone (TPQ) is generated by copper-dependent autoxidation of a specific tyrosyl residue. Mostly expressed in stems, and, at lower levels, in flowers and leaves. Mainly detectable in stipules, hypocotyls and roots.

The protein localises to the peroxisome. The enzyme catalyses a primary methyl amine + O2 + H2O = an aldehyde + H2O2 + NH4(+). It functions in the pathway amine and polyamine degradation; putrescine degradation. In terms of biological role, copper amine oxidase that can use putrescine and spermidine as substrates. Involved in putrescine catabolism in peroxisomes. This Arabidopsis thaliana (Mouse-ear cress) protein is Amine oxidase [copper-containing] alpha 3, peroxisomal.